The following is a 546-amino-acid chain: CTP synthase (546 aa).

The interval 1–269 is amidoligase domain; sequence MNSNTKIIFV…DAKLVELLNL (269 aa). Ser-16 lines the CTP pocket. A UTP-binding site is contributed by Ser-16. Residues 17–22 and Asp-74 each bind ATP; that span reads SLGKGV. Positions 74 and 143 each coordinate Mg(2+). CTP contacts are provided by residues 150-152, 190-195, and Lys-226; these read DIE and KTKPTQ. UTP-binding positions include 190 to 195 and Lys-226; that span reads KTKPTQ. The Glutamine amidotransferase type-1 domain occupies 294–546; that stretch reads TIAMVGKYVS…IQAAIENSNN (253 aa). Position 356 (Gly-356) interacts with L-glutamine. Cys-383 serves as the catalytic Nucleophile; for glutamine hydrolysis. Residues 384–387, Glu-407, and Arg-474 each bind L-glutamine; that span reads LGMQ. Catalysis depends on residues His-519 and Glu-521.

Belongs to the CTP synthase family. As to quaternary structure, homotetramer.

The catalysed reaction is UTP + L-glutamine + ATP + H2O = CTP + L-glutamate + ADP + phosphate + 2 H(+). It carries out the reaction L-glutamine + H2O = L-glutamate + NH4(+). The enzyme catalyses UTP + NH4(+) + ATP = CTP + ADP + phosphate + 2 H(+). The protein operates within pyrimidine metabolism; CTP biosynthesis via de novo pathway; CTP from UDP: step 2/2. With respect to regulation, allosterically activated by GTP, when glutamine is the substrate; GTP has no effect on the reaction when ammonia is the substrate. The allosteric effector GTP functions by stabilizing the protein conformation that binds the tetrahedral intermediate(s) formed during glutamine hydrolysis. Inhibited by the product CTP, via allosteric rather than competitive inhibition. Catalyzes the ATP-dependent amination of UTP to CTP with either L-glutamine or ammonia as the source of nitrogen. Regulates intracellular CTP levels through interactions with the four ribonucleotide triphosphates. The protein is CTP synthase of Francisella tularensis subsp. mediasiatica (strain FSC147).